Here is a 390-residue protein sequence, read N- to C-terminus: MASTEIMTINMGPQHPSTHGVLRLIVELDGEIIQKVTPHIGYLHRGIEKLSEHRTYHQTIPLTDRLDYLAPMSNNLGYVLAVEKLLGIDVPERAQVIRVIMAELTRLKSHLVWIACHALDIGAMTVFLYAFRERENIMDIYEMVSGARMTSNFFRVGGLSKDIPEGFTAAVREVLDTFPGHFDTYEGLLTKNTIWLQRTIGNGVISAEDAIDYGITGPALRGSGVDWDLRRDNPYSGYEKYDFKVPVGENCDTFDRYKVRLVEMRESVKIIRQALDSLKPGPVLADEPQICYPPKENVYNSIEGLIHHFKIASEGFSTPEGEVYQSVEAPKGELGYYLVSDGSTKPYRMRIRPPSFVNLQAIEKMAKGAMIADLVAVIGTLDIVLGEIDR.

The protein belongs to the complex I 49 kDa subunit family. As to quaternary structure, NDH-1 is composed of 14 different subunits. Subunits NuoB, C, D, E, F, and G constitute the peripheral sector of the complex.

It localises to the cell inner membrane. It catalyses the reaction a quinone + NADH + 5 H(+)(in) = a quinol + NAD(+) + 4 H(+)(out). Its function is as follows. NDH-1 shuttles electrons from NADH, via FMN and iron-sulfur (Fe-S) centers, to quinones in the respiratory chain. The immediate electron acceptor for the enzyme in this species is believed to be ubiquinone. Couples the redox reaction to proton translocation (for every two electrons transferred, four hydrogen ions are translocated across the cytoplasmic membrane), and thus conserves the redox energy in a proton gradient. This chain is NADH-quinone oxidoreductase subunit D, found in Geotalea uraniireducens (strain Rf4) (Geobacter uraniireducens).